The following is a 310-amino-acid chain: Aspartate carbamoyltransferase catalytic subunit 2 (310 aa).

The carbamoyl phosphate site is built by Arg55 and Thr56. L-aspartate is bound at residue Lys85. Carbamoyl phosphate contacts are provided by Arg106, His134, and Gln137. Residues Arg167 and Arg228 each coordinate L-aspartate. Residues Leu266 and Pro267 each coordinate carbamoyl phosphate.

Belongs to the aspartate/ornithine carbamoyltransferase superfamily. ATCase family. Heterododecamer (2C3:3R2) of six catalytic PyrB chains organized as two trimers (C3), and six regulatory PyrI chains organized as three dimers (R2).

It catalyses the reaction carbamoyl phosphate + L-aspartate = N-carbamoyl-L-aspartate + phosphate + H(+). It participates in pyrimidine metabolism; UMP biosynthesis via de novo pathway; (S)-dihydroorotate from bicarbonate: step 2/3. Catalyzes the condensation of carbamoyl phosphate and aspartate to form carbamoyl aspartate and inorganic phosphate, the committed step in the de novo pyrimidine nucleotide biosynthesis pathway. The polypeptide is Aspartate carbamoyltransferase catalytic subunit 2 (Shewanella halifaxensis (strain HAW-EB4)).